The chain runs to 230 residues: MKPPVILINYKAYENSYGKKSIEITKKIEKVSKEYGTEIIVSVPATMIHRISEESELTVFAQHVDSGEQGARTGAILPEMIKDAGARGSLLNHSERRIRLDEMAESLERIRVLNLESVVCVDRYELVLPVALLRPNAVLIEPPELIGTGIPVSKAKPEAITKAVEEIKKTKDVYLLAGAGITTGEDVFKAIELGADGIGAASAVMKAKEPEKVVEDFVKNAIKAMEKRGE.

Residue 9-11 (NYK) coordinates substrate. H93 serves as the catalytic Electrophile. The active-site Proton acceptor is the E141. Substrate contacts are provided by residues I146, G180, and 201–202 (AS).

It belongs to the triosephosphate isomerase family. In terms of assembly, homotetramer; dimer of dimers.

The protein resides in the cytoplasm. It carries out the reaction D-glyceraldehyde 3-phosphate = dihydroxyacetone phosphate. Its pathway is carbohydrate biosynthesis; gluconeogenesis. It functions in the pathway carbohydrate degradation; glycolysis; D-glyceraldehyde 3-phosphate from glycerone phosphate: step 1/1. Functionally, involved in the gluconeogenesis. Catalyzes stereospecifically the conversion of dihydroxyacetone phosphate (DHAP) to D-glyceraldehyde-3-phosphate (G3P). This chain is Triosephosphate isomerase, found in Sulfolobus acidocaldarius (strain ATCC 33909 / DSM 639 / JCM 8929 / NBRC 15157 / NCIMB 11770).